A 367-amino-acid polypeptide reads, in one-letter code: tRNA/tmRNA (uracil-C(5))-methyltransferase (367 aa).

Residues Gln-190, Tyr-218, Asn-223, Glu-239, and Asp-299 each contribute to the S-adenosyl-L-methionine site. Residue Cys-324 is the Nucleophile of the active site. Glu-358 serves as the catalytic Proton acceptor.

The protein belongs to the class I-like SAM-binding methyltransferase superfamily. RNA M5U methyltransferase family. TrmA subfamily.

The catalysed reaction is uridine(54) in tRNA + S-adenosyl-L-methionine = 5-methyluridine(54) in tRNA + S-adenosyl-L-homocysteine + H(+). It carries out the reaction uridine(341) in tmRNA + S-adenosyl-L-methionine = 5-methyluridine(341) in tmRNA + S-adenosyl-L-homocysteine + H(+). In terms of biological role, dual-specificity methyltransferase that catalyzes the formation of 5-methyluridine at position 54 (m5U54) in all tRNAs, and that of position 341 (m5U341) in tmRNA (transfer-mRNA). This Yersinia enterocolitica serotype O:8 / biotype 1B (strain NCTC 13174 / 8081) protein is tRNA/tmRNA (uracil-C(5))-methyltransferase.